The following is a 397-amino-acid chain: Aromatic-amino-acid aminotransferase (397 aa).

Substrate contacts are provided by G34, Y66, W131, and N184. Residue K247 is modified to N6-(pyridoxal phosphate)lysine. Substrate-binding residues include R281 and R375.

The protein belongs to the class-I pyridoxal-phosphate-dependent aminotransferase family. Homodimer. Pyridoxal 5'-phosphate is required as a cofactor.

The protein resides in the cytoplasm. The enzyme catalyses an aromatic L-alpha-amino acid + 2-oxoglutarate = an aromatic oxo-acid + L-glutamate. It carries out the reaction (3S)-3-methyl-L-phenylalanine + 2-oxoglutarate = (3S)-2-oxo-3-phenylbutanoate + L-glutamate. The protein operates within amino-acid biosynthesis; L-phenylalanine biosynthesis; L-phenylalanine from phenylpyruvate (ArAT route): step 1/1. Its pathway is amino-acid biosynthesis; L-tyrosine biosynthesis; L-tyrosine from (4-hydroxyphenyl)pyruvate: step 1/1. In terms of biological role, broad-specificity enzyme that catalyzes the transamination of 2-ketoisocaproate, p-hydroxyphenylpyruvate, and phenylpyruvate to yield leucine, tyrosine, and phenylalanine, respectively. In vitro, is able to catalyze the conversion of beta-methyl phenylpyruvate to the nonproteinogenic amino acid (2S,3S)-beta-methyl-phenylalanine, a building block of the antibiotic mannopeptimycin produced by Streptomyces hygroscopicus NRRL3085. The chain is Aromatic-amino-acid aminotransferase (tyrB) from Escherichia coli (strain K12).